Consider the following 98-residue polypeptide: MCANNKSALKRAQIAERNRVRNKTYKSSVKTLMKNYLSAVQAYAANPTPESKQEAQTRLAAAYSRIDKAVKRGILHPNNGARKKSRLASKLKPIEQTA.

The disordered stretch occupies residues 76–98 (HPNNGARKKSRLASKLKPIEQTA).

Belongs to the bacterial ribosomal protein bS20 family.

In terms of biological role, binds directly to 16S ribosomal RNA. This chain is Small ribosomal subunit protein bS20, found in Trichormus variabilis (strain ATCC 29413 / PCC 7937) (Anabaena variabilis).